A 247-amino-acid polypeptide reads, in one-letter code: Carboxy-S-adenosyl-L-methionine synthase (247 aa).

S-adenosyl-L-methionine contacts are provided by residues Tyr-40, 65–67 (GAS), 90–91 (DN), 122–123 (DI), Asn-137, and Arg-204.

Belongs to the class I-like SAM-binding methyltransferase superfamily. Cx-SAM synthase family. In terms of assembly, homodimer.

It catalyses the reaction prephenate + S-adenosyl-L-methionine = carboxy-S-adenosyl-L-methionine + 3-phenylpyruvate + H2O. Catalyzes the conversion of S-adenosyl-L-methionine (SAM) to carboxy-S-adenosyl-L-methionine (Cx-SAM). The chain is Carboxy-S-adenosyl-L-methionine synthase from Pseudomonas putida (strain ATCC 700007 / DSM 6899 / JCM 31910 / BCRC 17059 / LMG 24140 / F1).